Reading from the N-terminus, the 810-residue chain is Glycerol-3-phosphate acyltransferase (810 aa).

An HXXXXD motif motif is present at residues 305-310; it reads CHRSHI.

The protein belongs to the GPAT/DAPAT family.

The protein localises to the cell inner membrane. It catalyses the reaction sn-glycerol 3-phosphate + an acyl-CoA = a 1-acyl-sn-glycero-3-phosphate + CoA. The protein operates within phospholipid metabolism; CDP-diacylglycerol biosynthesis; CDP-diacylglycerol from sn-glycerol 3-phosphate: step 1/3. The chain is Glycerol-3-phosphate acyltransferase from Haemophilus influenzae (strain 86-028NP).